We begin with the raw amino-acid sequence, 232 residues long: 5'-methylthioadenosine/S-adenosylhomocysteine nucleosidase (232 aa).

Glu12 acts as the Proton acceptor in catalysis. Residues Gly78, Met153, and 174-175 each bind substrate; that span reads ME. Asp198 serves as the catalytic Proton donor.

This sequence belongs to the PNP/UDP phosphorylase family. MtnN subfamily.

The catalysed reaction is S-adenosyl-L-homocysteine + H2O = S-(5-deoxy-D-ribos-5-yl)-L-homocysteine + adenine. It catalyses the reaction S-methyl-5'-thioadenosine + H2O = 5-(methylsulfanyl)-D-ribose + adenine. It carries out the reaction 5'-deoxyadenosine + H2O = 5-deoxy-D-ribose + adenine. Its pathway is amino-acid biosynthesis; L-methionine biosynthesis via salvage pathway; S-methyl-5-thio-alpha-D-ribose 1-phosphate from S-methyl-5'-thioadenosine (hydrolase route): step 1/2. Its function is as follows. Catalyzes the irreversible cleavage of the glycosidic bond in both 5'-methylthioadenosine (MTA) and S-adenosylhomocysteine (SAH/AdoHcy) to adenine and the corresponding thioribose, 5'-methylthioribose and S-ribosylhomocysteine, respectively. Also cleaves 5'-deoxyadenosine, a toxic by-product of radical S-adenosylmethionine (SAM) enzymes, into 5-deoxyribose and adenine. This Hydrogenovibrio crunogenus (strain DSM 25203 / XCL-2) (Thiomicrospira crunogena) protein is 5'-methylthioadenosine/S-adenosylhomocysteine nucleosidase.